A 65-amino-acid polypeptide reads, in one-letter code: Peptide ToAcP (65 aa).

The first 24 residues, 1 to 24 (MKMKMIVVISILLIVFSLSSKAMS), serve as a signal peptide directing secretion. The propeptide occupies 25–34 (LEDEQESVQR). Alanine amide is present on alanine 58. Positions 59–65 (GRFDPAV) are excised as a propeptide.

In terms of tissue distribution, expressed by the venom gland.

It is found in the secreted. Its function is as follows. Helical wheel projections predict no hydrophobic face, suggesting a non-amphipathic peptide. Does not show antifungal activity. In Tityus obscurus (Amazonian scorpion), this protein is Peptide ToAcP.